The sequence spans 215 residues: Na(+)-translocating NADH-quinone reductase subunit D (215 aa).

Transmembrane regions (helical) follow at residues 14 to 34 (PFIS…ALAV), 42 to 62 (FVMA…ISLI), 72 to 92 (IIVQ…LLKA), 103 to 123 (VFVG…AYAM), 131 to 151 (FLDG…VGTI), and 178 to 198 (NGML…IWVL).

It belongs to the NqrDE/RnfAE family. As to quaternary structure, composed of six subunits; NqrA, NqrB, NqrC, NqrD, NqrE and NqrF.

Its subcellular location is the cell inner membrane. It carries out the reaction a ubiquinone + n Na(+)(in) + NADH + H(+) = a ubiquinol + n Na(+)(out) + NAD(+). NQR complex catalyzes the reduction of ubiquinone-1 to ubiquinol by two successive reactions, coupled with the transport of Na(+) ions from the cytoplasm to the periplasm. NqrA to NqrE are probably involved in the second step, the conversion of ubisemiquinone to ubiquinol. The polypeptide is Na(+)-translocating NADH-quinone reductase subunit D (Tolumonas auensis (strain DSM 9187 / NBRC 110442 / TA 4)).